We begin with the raw amino-acid sequence, 343 residues long: E3 ubiquitin-protein ligase RNF113A (343 aa).

The residue at position 2 (Ala-2) is an N-acetylalanine. The segment at 2 to 60 (AEQLSPGKTTDQVCTFLFKKPGRKVAAGRRKRPICNQESGDSSSSSDEGNTVVRPEKKR) is important for interaction with SNRNP200/BRR2. Residue Ser-6 is modified to Phosphoserine. Residues 23-34 (GRKVAAGRRKRP) show a composition bias toward basic residues. Residues 23-95 (GRKVAAGRRK…EEEEENKSES (73 aa)) are disordered. The span at 39–50 (ESGDSSSSSDEG) shows a compositional bias: low complexity. Residues 50 to 61 (GNTVVRPEKKRA) form an important for interaction with CXCR4 region. 2 positions are modified to phosphoserine: Ser-84 and Ser-85. The C3H1-type zinc finger occupies 196–224 (DYQPDICKDYKETGFCGFGDSCKFLHDRS). At Ser-253 the chain carries Phosphoserine. Residues 262-300 (CFICRQTFQNPVVTKCRHYFCESCALQHFRTTPRCYVCD) form an RING-type zinc finger. A disordered region spans residues 323–343 (AEGGGASGFPEDPDEDPVPIT). Residues 333–343 (EDPDEDPVPIT) show a composition bias toward acidic residues.

In terms of assembly, component of pre-catalytic and catalytic spliceosome complexes. Interacts (via N-terminus) with the spliceosome subunit SNRNP200/BRR2. Component of the minor spliceosome. Within this complex, interacts with SCNM1 and CRIPT.

Its subcellular location is the nucleus. The protein resides in the nucleus speckle. The enzyme catalyses S-ubiquitinyl-[E2 ubiquitin-conjugating enzyme]-L-cysteine + [acceptor protein]-L-lysine = [E2 ubiquitin-conjugating enzyme]-L-cysteine + N(6)-ubiquitinyl-[acceptor protein]-L-lysine.. It participates in protein modification; protein ubiquitination. Required for pre-mRNA splicing as component of the spliceosome. As a component of the minor spliceosome, involved in the splicing of U12-type introns in pre-mRNAs. E3 ubiquitin-protein ligase that catalyzes the transfer of ubiquitin onto target proteins. Catalyzes polyubiquitination of SNRNP200/BRR2 with non-canonical 'Lys-63'-linked polyubiquitin chains. Plays a role in DNA repair via its role in the synthesis of 'Lys-63'-linked polyubiquitin chains that recruit ALKBH3 and the ASCC complex to sites of DNA damage by alkylating agents. Ubiquitinates CXCR4, leading to its degradation, and thereby contributes to the termination of CXCR4 signaling. The sequence is that of E3 ubiquitin-protein ligase RNF113A (RNF113A) from Bos taurus (Bovine).